Consider the following 545-residue polypeptide: Capsular polysaccharide phosphotransferase SacB (545 aa).

The protein belongs to the stealth family.

Functionally, part of a capsular biosynthesis operon and has been suggested to be the polymerase that links individual UDP-N-acetyl-D-mannosamine monomers. In serotype A the capsule is composed of repeated units of (alpha 1-6)-linked N-acetyl-D-mannosamine-1-phosphate. Non-polar disruption of this open reading frame prevented capsule synthesis. The protein is Capsular polysaccharide phosphotransferase SacB (sacB) of Neisseria meningitidis serogroup A.